Here is a 690-residue protein sequence, read N- to C-terminus: Adhesion G protein-coupled receptor L4 (690 aa).

Residues 1–19 (MKRLPLLVVFSTLLNCSYT) form the signal peptide. An EGF-like 1 domain is found at 20 to 57 (QNCTKTPCLPNAKCEIRNGIEACYCNMGFSGNGVTICE). Residues 20–432 (QNCTKTPCLP…DYNILTRITQ (413 aa)) lie on the Extracellular side of the membrane. An N-linked (GlcNAc...) asparagine glycan is attached at Asn-21. 6 cysteine pairs are disulfide-bonded: Cys-22–Cys-33, Cys-27–Cys-42, Cys-44–Cys-56, Cys-62–Cys-75, Cys-69–Cys-84, and Cys-86–Cys-107. One can recognise an EGF-like 2; calcium-binding domain in the interval 58–108 (DDNECGNLTQSCGENANCTNTEGSYYCMCVPGFRSSSNQDRFITNDGTVCI). Asn-64 and Asn-74 each carry an N-linked (GlcNAc...) asparagine glycan. Residues Asn-127, Asn-177, Asn-188, Asn-249, Asn-381, and Asn-395 are each glycosylated (N-linked (GlcNAc...) asparagine). In terms of domain architecture, GAIN-B spans 244–419 (TEFDTNSTDI…AILMSSGPSI (176 aa)). 2 cysteine pairs are disulfide-bonded: Cys-370-Cys-401 and Cys-389-Cys-403. The segment at 370 to 419 (CAFWNYSPDTMNGSWSSEGCELTYSNETHTSCRCNHLTHFAILMSSGPSI) is GPS. Residues 433–453 (LGIIISLICLAICIFTFWFFS) form a helical membrane-spanning segment. At 454–460 (EIQSTRT) the chain is on the cytoplasmic side. A helical membrane pass occupies residues 461–481 (TIHKNLCCSLFLAELVFLVGI). Over 482–499 (NTNTNKLFCSIIAGLLHY) the chain is Extracellular. The helical transmembrane segment at 500–520 (FFLAAFAWMCIEGIHLYLIVV) threads the bilayer. Residues 521–532 (GVIYNKGFLHKN) lie on the Cytoplasmic side of the membrane. The chain crosses the membrane as a helical span at residues 533-553 (FYIFGYLSPAVVVGFSAALGY). Over 554–573 (RYYGTTKVCWLSTENNFIWS) the chain is Extracellular. Residues 574 to 594 (FIGPACLIILVNLLAFGVIIY) form a helical membrane-spanning segment. The Cytoplasmic segment spans residues 595–618 (KVFRHTAGLKPEVSCFENIRSCAR). A helical transmembrane segment spans residues 619 to 639 (GALALLFLLGTTWIFGVLHVV). The Extracellular segment spans residues 640-646 (HASVVTA). The chain crosses the membrane as a helical span at residues 647-667 (YLFTVSNAFQGMFIFLFLCVL). Over 668–690 (SRKIQEEYYRLFKNVPCCFGCLR) the chain is Cytoplasmic.

The protein belongs to the G-protein coupled receptor 2 family. Adhesion G-protein coupled receptor (ADGR) subfamily. In terms of assembly, heterodimer of 2 chains generated by proteolytic processing; the large extracellular N-terminal fragment and the membrane-bound C-terminal fragment predominantly remain associated and non-covalently linked. In terms of processing, glycosylated. Post-translationally, proteolytically cleaved into 2 subunits, an extracellular alpha subunit and a seven-transmembrane subunit. Detected in the majority of epithelial cells in tumor and normal tissues. Expressed also in human umbilical vein endothelial cells.

The protein localises to the cell membrane. In terms of biological role, endothelial orphan receptor that acts as a key regulator of angiogenesis. The sequence is that of Adhesion G protein-coupled receptor L4 from Homo sapiens (Human).